The sequence spans 84 residues: Three-finger toxin 3FTx-1 (84 aa).

An N-terminal signal peptide occupies residues 1–21; the sequence is MKTLLLTLVVVTIVCLDLGNS. Cystine bridges form between cysteine 24/cysteine 41, cysteine 34/cysteine 59, cysteine 63/cysteine 71, and cysteine 72/cysteine 77. N-linked (GlcNAc...) asparagine glycosylation occurs at asparagine 78.

Belongs to the three-finger toxin family. Short-chain subfamily. As to expression, expressed by the venom gland.

It is found in the secreted. The sequence is that of Three-finger toxin 3FTx-1 from Micrurus corallinus (Brazilian coral snake).